We begin with the raw amino-acid sequence, 463 residues long: Glutamate--tRNA ligase 1 (463 aa).

The short motif at Pro10–Gly20 is the 'HIGH' region element. Positions Lys238 to Arg242 match the 'KMSKS' region motif. An ATP-binding site is contributed by Lys241.

This sequence belongs to the class-I aminoacyl-tRNA synthetase family. Glutamate--tRNA ligase type 1 subfamily. In terms of assembly, monomer.

The protein localises to the cytoplasm. It carries out the reaction tRNA(Glu) + L-glutamate + ATP = L-glutamyl-tRNA(Glu) + AMP + diphosphate. Catalyzes the attachment of glutamate to tRNA(Glu) in a two-step reaction: glutamate is first activated by ATP to form Glu-AMP and then transferred to the acceptor end of tRNA(Glu). This is Glutamate--tRNA ligase 1 from Helicobacter pylori (strain ATCC 700392 / 26695) (Campylobacter pylori).